Reading from the N-terminus, the 198-residue chain is Probable GTP-binding protein EngB (198 aa).

The EngB-type G domain occupies 22-195 (NRVEVAFVGR…IDNLFLEFAT (174 aa)). Residues 30 to 37 (GRSNVGKS), 57 to 61 (GKTRL), 75 to 78 (DLPG), 142 to 145 (TKSD), and 174 to 176 (FSS) contribute to the GTP site. Residues S37 and T59 each coordinate Mg(2+).

Belongs to the TRAFAC class TrmE-Era-EngA-EngB-Septin-like GTPase superfamily. EngB GTPase family. Mg(2+) serves as cofactor.

Its function is as follows. Necessary for normal cell division and for the maintenance of normal septation. The protein is Probable GTP-binding protein EngB of Clostridium beijerinckii (strain ATCC 51743 / NCIMB 8052) (Clostridium acetobutylicum).